Here is a 244-residue protein sequence, read N- to C-terminus: SURF1-like protein (244 aa).

2 helical membrane-spanning segments follow: residues 7–23 (ILTTFIILTSLGFWQLS) and 201–219 (YAITWFGLAIFLIVIYVIY).

This sequence belongs to the SURF1 family.

It localises to the cell membrane. The protein is SURF1-like protein of Rickettsia prowazekii (strain Madrid E).